The following is a 248-amino-acid chain: 2,3-bisphosphoglycerate-dependent phosphoglycerate mutase (248 aa).

Residues 8–15, 21–22, Arg60, 87–90, Lys98, 114–115, and 183–184 each bind substrate; these read RHGESEWN, TG, ERHY, RR, and GN. His9 acts as the Tele-phosphohistidine intermediate in catalysis. Residue Glu87 is the Proton donor/acceptor of the active site.

This sequence belongs to the phosphoglycerate mutase family. BPG-dependent PGAM subfamily.

It carries out the reaction (2R)-2-phosphoglycerate = (2R)-3-phosphoglycerate. Its pathway is carbohydrate degradation; glycolysis; pyruvate from D-glyceraldehyde 3-phosphate: step 3/5. Its function is as follows. Catalyzes the interconversion of 2-phosphoglycerate and 3-phosphoglycerate. This is 2,3-bisphosphoglycerate-dependent phosphoglycerate mutase from Borrelia hermsii (strain HS1 / DAH).